The primary structure comprises 1203 residues: Transmembrane channel-like protein 2 (1203 aa).

Disordered regions lie at residues 1-39 (MPKS…IDSR) and 64-90 (PHTR…EASK). Positions 73-86 (FDDDDDEFDEEDDK) are enriched in acidic residues. The chain crosses the membrane as a helical span at residues 191 to 213 (VLGVNITITFIMCMFVVIPEWLA). Residue Asn-225 is glycosylated (N-linked (GlcNAc...) asparagine). Transmembrane regions (helical) follow at residues 276–298 (YRVP…FIIL), 369–391 (FVAR…WAIM), 406–428 (ATAI…LGKI), 441–463 (LGRV…MLQL), 665–687 (MIWL…LIIL), and 714–736 (FFFA…VIAS). Asn-748 is a glycosylation site (N-linked (GlcNAc...) asparagine). A helical membrane pass occupies residues 780 to 802 (IIIPVLVLLSLVIYFLIAMVTGL). 4 disordered regions span residues 826-908 (ELAG…SLPP), 927-1039 (KYGR…IEKQ), 1059-1087 (ATVE…HEPL), and 1112-1203 (NDET…SDND). Residues 865 to 874 (NRSTAKSVSG) are compositionally biased toward polar residues. Over residues 898–908 (DSESTTSSLPP) the composition is skewed to low complexity. Residues 927 to 945 (KYGRHDDIEMEEGGGRLRE) are compositionally biased toward basic and acidic residues. Low complexity-rich tracts occupy residues 973-997 (QSFD…PSNS) and 1022-1035 (SASS…PSSS). The span at 1061–1076 (VENSSQDPTRPPSTDD) shows a compositional bias: polar residues. 2 stretches are compositionally biased toward basic and acidic residues: residues 1133–1147 (SPRE…KDQQ) and 1172–1203 (PPSE…SDND).

This sequence belongs to the TMC family.

The protein localises to the membrane. Probable ion channel. This is Transmembrane channel-like protein 2 (tmc-2) from Caenorhabditis elegans.